The primary structure comprises 191 residues: NF-kappa-B inhibitor-interacting Ras-like protein 2 (191 aa).

Residues 1 to 191 are small GTPase-like; that stretch reads MGKSCKVVVC…KNKGSGSLDG (191 aa). Residue 11-18 participates in GTP binding; the sequence is GQASVGKT. Residues 35 to 43 carry the Effector region motif; it reads MIETQEDIY. GTP-binding positions include 61-65 and 120-123; these read DTRGL and NKCD. The segment at 169–191 is disordered; it reads TQPQSKSAFPLSRKNKGSGSLDG.

Belongs to the small GTPase superfamily. Ras family. KappaB-Ras subfamily. In terms of assembly, interacts with both NF-kappa-B inhibitor alpha (NFKBIA) and beta (NFKBIB) in vitro. However, it probably only interacts with NFKBIB in vivo. Interacts with GFOD1. Widely expressed.

It is found in the cytoplasm. Atypical Ras-like protein that acts as a potent regulator of NF-kappa-B activity by preventing the degradation of NF-kappa-B inhibitor beta (NFKBIB) by most signals, explaining why NFKBIB is more resistant to degradation. May act by blocking phosphorylation of NFKBIB and nuclear localization of p65/RELA NF-kappa-B subunit. It is unclear whether it acts as a GTPase. Both GTP- and GDP-bound forms block phosphorylation of NFKBIB. The polypeptide is NF-kappa-B inhibitor-interacting Ras-like protein 2 (NKIRAS2) (Homo sapiens (Human)).